A 592-amino-acid polypeptide reads, in one-letter code: Beta-xylosidase (592 aa).

An N-terminal signal peptide occupies residues 1–19; it reads MYLNACRALTLISVLSLLA. A lipid anchor (N-palmitoyl cysteine) is attached at Cys20. A lipid anchor (S-diacylglycerol cysteine) is attached at Cys20.

This sequence belongs to the glycosyl hydrolase 43 family.

The protein resides in the cell outer membrane. In terms of biological role, xylosidase involved in ulvan degradation. Ulvan is the main polysaccharide component of the Ulvales (green seaweed) cell wall. It is composed of disaccharide building blocks comprising 3-sulfated rhamnose (Rha3S) linked to D-glucuronic acid (GlcA), L-iduronic acid (IduA), or D-xylose (Xyl). Beta-xylosidase converts Xyl-Rha3S, a product of alpha-L-rhamnosidase acting on Rha-Xyl-Rha3S oligosaccharides, further to Xyl and Rha3S. The sequence is that of Beta-xylosidase from Formosa agariphila (strain DSM 15362 / KCTC 12365 / LMG 23005 / KMM 3901 / M-2Alg 35-1).